Reading from the N-terminus, the 151-residue chain is D-aminoacyl-tRNA deacylase (151 aa).

A Gly-cisPro motif, important for rejection of L-amino acids motif is present at residues 137–138 (GP).

It belongs to the DTD family. In terms of assembly, homodimer.

Its subcellular location is the cytoplasm. The enzyme catalyses glycyl-tRNA(Ala) + H2O = tRNA(Ala) + glycine + H(+). The catalysed reaction is a D-aminoacyl-tRNA + H2O = a tRNA + a D-alpha-amino acid + H(+). In terms of biological role, an aminoacyl-tRNA editing enzyme that deacylates mischarged D-aminoacyl-tRNAs. Also deacylates mischarged glycyl-tRNA(Ala), protecting cells against glycine mischarging by AlaRS. Acts via tRNA-based rather than protein-based catalysis; rejects L-amino acids rather than detecting D-amino acids in the active site. By recycling D-aminoacyl-tRNA to D-amino acids and free tRNA molecules, this enzyme counteracts the toxicity associated with the formation of D-aminoacyl-tRNA entities in vivo and helps enforce protein L-homochirality. The protein is D-aminoacyl-tRNA deacylase of Solibacter usitatus (strain Ellin6076).